The primary structure comprises 210 residues: Uracil phosphoribosyltransferase (210 aa).

Residues Arg-78, Arg-103, and 130-138 (DPMLATGGS) contribute to the 5-phospho-alpha-D-ribose 1-diphosphate site. Residues Ile-195 and 200 to 202 (GDA) each bind uracil. Asp-201 provides a ligand contact to 5-phospho-alpha-D-ribose 1-diphosphate.

It belongs to the UPRTase family. Mg(2+) is required as a cofactor.

It catalyses the reaction UMP + diphosphate = 5-phospho-alpha-D-ribose 1-diphosphate + uracil. It participates in pyrimidine metabolism; UMP biosynthesis via salvage pathway; UMP from uracil: step 1/1. Its activity is regulated as follows. Allosterically activated by GTP. Functionally, catalyzes the conversion of uracil and 5-phospho-alpha-D-ribose 1-diphosphate (PRPP) to UMP and diphosphate. The protein is Uracil phosphoribosyltransferase of Leifsonia xyli subsp. xyli (strain CTCB07).